The chain runs to 413 residues: uncharacterized protein (413 aa).

Residues 25–47 (IVNLSALLPLITSTTSTAGSIIT) form a helical membrane-spanning segment.

It is found in the host membrane. This is an uncharacterized protein from Acidianus sp. F28 (AFV-2).